A 912-amino-acid polypeptide reads, in one-letter code: Transferrin-binding protein A (912 aa).

The N-terminal stretch at 1 to 23 (MTKKPYFRLSIISCLLISCYVKA) is a signal peptide. Residues 50-57 (ETISVTAE) carry the TonB box motif. Residues 63–188 (KDNEVTGLGK…LAGSVTFQSK (126 aa)) form the TBDR plug domain. The region spanning 199 to 912 (SWGIQTKNAY…NYTLTLEMKF (714 aa)) is the TBDR beta-barrel domain. The TonB C-terminal box motif lies at 895–912 (TRYAASGRNYTLTLEMKF).

This sequence belongs to the TonB-dependent receptor family.

It localises to the cell outer membrane. Functionally, haemophilus acquires iron by extracting it from serum transferrin (TF) in its human host. Acts as a transferrin receptor and is required for transferrin utilization. The chain is Transferrin-binding protein A from Haemophilus influenzae (strain ATCC 51907 / DSM 11121 / KW20 / Rd).